A 379-amino-acid chain; its full sequence is UDP-N-acetylglucosamine--N-acetylmuramyl-(pentapeptide) pyrophosphoryl-undecaprenol N-acetylglucosamine transferase (379 aa).

UDP-N-acetyl-alpha-D-glucosamine contacts are provided by residues 17–19 (TGG), Asn-128, Arg-169, Ser-197, and Gln-298.

The protein belongs to the glycosyltransferase 28 family. MurG subfamily.

The protein localises to the cell inner membrane. It carries out the reaction di-trans,octa-cis-undecaprenyl diphospho-N-acetyl-alpha-D-muramoyl-L-alanyl-D-glutamyl-meso-2,6-diaminopimeloyl-D-alanyl-D-alanine + UDP-N-acetyl-alpha-D-glucosamine = di-trans,octa-cis-undecaprenyl diphospho-[N-acetyl-alpha-D-glucosaminyl-(1-&gt;4)]-N-acetyl-alpha-D-muramoyl-L-alanyl-D-glutamyl-meso-2,6-diaminopimeloyl-D-alanyl-D-alanine + UDP + H(+). The protein operates within cell wall biogenesis; peptidoglycan biosynthesis. Functionally, cell wall formation. Catalyzes the transfer of a GlcNAc subunit on undecaprenyl-pyrophosphoryl-MurNAc-pentapeptide (lipid intermediate I) to form undecaprenyl-pyrophosphoryl-MurNAc-(pentapeptide)GlcNAc (lipid intermediate II). In Brucella canis (strain ATCC 23365 / NCTC 10854 / RM-666), this protein is UDP-N-acetylglucosamine--N-acetylmuramyl-(pentapeptide) pyrophosphoryl-undecaprenol N-acetylglucosamine transferase.